The chain runs to 299 residues: GTPase Era (299 aa).

Residues 4–171 (KSGFVAILGR…IKLLTDNLEE (168 aa)) enclose the Era-type G domain. The segment at 12-19 (GRPNVGKS) is G1. Position 12–19 (12–19 (GRPNVGKS)) interacts with GTP. Residues 38–42 (QTTRN) form a G2 region. The G3 stretch occupies residues 59 to 62 (DTPG). GTP-binding positions include 59 to 63 (DTPGI) and 121 to 124 (NKID). The interval 121-124 (NKID) is G4. The tract at residues 150 to 152 (ISA) is G5. In terms of domain architecture, KH type-2 spans 202–280 (TQQEVPHSVA…YLETWVKVKK (79 aa)).

The protein belongs to the TRAFAC class TrmE-Era-EngA-EngB-Septin-like GTPase superfamily. Era GTPase family. In terms of assembly, monomer.

It is found in the cytoplasm. The protein resides in the cell membrane. Its function is as follows. An essential GTPase that binds both GDP and GTP, with rapid nucleotide exchange. Plays a role in 16S rRNA processing and 30S ribosomal subunit biogenesis and possibly also in cell cycle regulation and energy metabolism. In Streptococcus agalactiae serotype III (strain NEM316), this protein is GTPase Era.